Consider the following 883-residue polypeptide: Translation initiation factor IF-2 (883 aa).

Polar residues predominate over residues 32–45; sequence NDLNGKNNSNSSIN. 2 disordered regions span residues 32 to 216 and 251 to 275; these read NDLN…QNKY and RKLG…AETE. Basic and acidic residues predominate over residues 46–62; that stretch reads LDKHNNKVEYSQNRDNR. Polar residues predominate over residues 75 to 216; that stretch reads GGYSQNRDNR…VGKNTSQNKY (142 aa). Over residues 251–260 the composition is skewed to basic and acidic residues; that stretch reads RKLGEKKKQQ. The 174-residue stretch at 381 to 554 folds into the tr-type G domain; it reads EKPPVITIMG…DMMLLKANPS (174 aa). The G1 stretch occupies residues 390–397; the sequence is GHVDHGKT. GTP is bound at residue 390 to 397; the sequence is GHVDHGKT. The G2 stretch occupies residues 415–419; sequence GITQH. Residues 436–439 are G3; that stretch reads DTPG. GTP contacts are provided by residues 436–440 and 490–493; these read DTPGH and NKID. A G4 region spans residues 490 to 493; that stretch reads NKID. Positions 526-528 are G5; sequence SAL.

This sequence belongs to the TRAFAC class translation factor GTPase superfamily. Classic translation factor GTPase family. IF-2 subfamily.

Its subcellular location is the cytoplasm. One of the essential components for the initiation of protein synthesis. Protects formylmethionyl-tRNA from spontaneous hydrolysis and promotes its binding to the 30S ribosomal subunits. Also involved in the hydrolysis of GTP during the formation of the 70S ribosomal complex. The chain is Translation initiation factor IF-2 from Borrelia garinii subsp. bavariensis (strain ATCC BAA-2496 / DSM 23469 / PBi) (Borreliella bavariensis).